We begin with the raw amino-acid sequence, 187 residues long: UPF0340 protein SPG_0604 (187 aa).

This sequence belongs to the UPF0340 family.

The chain is UPF0340 protein SPG_0604 from Streptococcus pneumoniae serotype 19F (strain G54).